The sequence spans 188 residues: ATP synthase subunit delta (188 aa).

Belongs to the ATPase delta chain family. F-type ATPases have 2 components, F(1) - the catalytic core - and F(0) - the membrane proton channel. F(1) has five subunits: alpha(3), beta(3), gamma(1), delta(1), epsilon(1). F(0) has three main subunits: a(1), b(2) and c(10-14). The alpha and beta chains form an alternating ring which encloses part of the gamma chain. F(1) is attached to F(0) by a central stalk formed by the gamma and epsilon chains, while a peripheral stalk is formed by the delta and b chains.

It localises to the cell membrane. F(1)F(0) ATP synthase produces ATP from ADP in the presence of a proton or sodium gradient. F-type ATPases consist of two structural domains, F(1) containing the extramembraneous catalytic core and F(0) containing the membrane proton channel, linked together by a central stalk and a peripheral stalk. During catalysis, ATP synthesis in the catalytic domain of F(1) is coupled via a rotary mechanism of the central stalk subunits to proton translocation. Its function is as follows. This protein is part of the stalk that links CF(0) to CF(1). It either transmits conformational changes from CF(0) to CF(1) or is implicated in proton conduction. The chain is ATP synthase subunit delta from Lawsonia intracellularis (strain PHE/MN1-00).